The chain runs to 421 residues: Serine--tRNA ligase (421 aa).

An L-serine-binding site is contributed by 229-231 (TAE). 260 to 262 (RSE) lines the ATP pocket. Glu283 serves as a coordination point for L-serine. Residue 347-350 (EISS) participates in ATP binding. L-serine is bound at residue Ser382.

It belongs to the class-II aminoacyl-tRNA synthetase family. Type-1 seryl-tRNA synthetase subfamily. Homodimer. The tRNA molecule binds across the dimer.

Its subcellular location is the cytoplasm. It catalyses the reaction tRNA(Ser) + L-serine + ATP = L-seryl-tRNA(Ser) + AMP + diphosphate + H(+). The catalysed reaction is tRNA(Sec) + L-serine + ATP = L-seryl-tRNA(Sec) + AMP + diphosphate + H(+). It participates in aminoacyl-tRNA biosynthesis; selenocysteinyl-tRNA(Sec) biosynthesis; L-seryl-tRNA(Sec) from L-serine and tRNA(Sec): step 1/1. In terms of biological role, catalyzes the attachment of serine to tRNA(Ser). Is also able to aminoacylate tRNA(Sec) with serine, to form the misacylated tRNA L-seryl-tRNA(Sec), which will be further converted into selenocysteinyl-tRNA(Sec). This chain is Serine--tRNA ligase, found in Symbiobacterium thermophilum (strain DSM 24528 / JCM 14929 / IAM 14863 / T).